The sequence spans 90 residues: Signal recognition particle 19 kDa protein (90 aa).

The protein belongs to the SRP19 family. Part of the signal recognition particle protein translocation system, which is composed of SRP and FtsY. Archaeal SRP consists of a 7S RNA molecule of 300 nucleotides and two protein subunits: SRP54 and SRP19.

Its subcellular location is the cytoplasm. Its function is as follows. Involved in targeting and insertion of nascent membrane proteins into the cytoplasmic membrane. Binds directly to 7S RNA and mediates binding of the 54 kDa subunit of the SRP. The chain is Signal recognition particle 19 kDa protein from Methanococcus aeolicus (strain ATCC BAA-1280 / DSM 17508 / OCM 812 / Nankai-3).